The chain runs to 92 residues: Small integral membrane protein 12 (92 aa).

Residues 15 to 34 form a helical membrane-spanning segment; that stretch reads YVTFPVAFVVGAVGYHLEWF.

Belongs to the SMIM12 family.

It localises to the membrane. The chain is Small integral membrane protein 12 (SMIM12) from Canis lupus familiaris (Dog).